We begin with the raw amino-acid sequence, 1470 residues long: MYSSSNSFLGGVNNARPGQPPFMQQPPYSQFPQGQQQIPQQTGFQPQPAGYGPQSASHLQPQPTGFPTGQLQPQFTGFPGAAPQQQQQQLGGYQAPAQQPQFTGYPPQSQPPSLQVPSTTGLPTRLAPRTSSEIANSFSDGAGVAPPPPPKSSGSKIPNIRLSFITAQDQAKFEQLFKSAVGDSQTMDGEKAKELLLRSRLPGSELSKIWVLSDTTKSGQLFFPEFALAMYLCNLRITGRELPATLPDKIKNEVSSMVDIISFGVPDTEPQASARTNVPSFDAPLLENKSAPPAPQHPKPQQPSNAQFLSQLAAQPTGFGPQATGLQPNQPSLLGANAALAPQATGFPGQSQQQYLQPQPTGLMTNPQATGYNGPRPPLPPMPTGFGSNLSSMQTGGLVAQPTGIPGQWGFVNAPSSGLPNIEALKQQLMPQPGREGGFTTAGLSGNASIPWAITKEEKKIYDDLFRAWDGFHKGFIGGDTAIEIMGQSGLDRKDLERIWTLADPNNRGRLNMDEFAVAMHLIYRKLNGYPVPNRLPPELIPPSTRNLNDSIGAVKSLLSQDAENRKASGAFLQPQKTGVSYLKEHSFRGGARSPGFGRKDATLFKNNDEAAAGYRSSARRRMGNDARPSSPAASQASEEELSVEQLKKKIRETQIMLDAVDFNDENRAEEDEVLDRRDRLEAESLMDRTRRVQDDIDTHPNAAFRNLDNGAERRALRRQLQAFEDQVPQVASEVRRIEREIADAKLELFRLKDAKAHPNSAANIVGTGPGGTVTEADRIKARARARMQARAAELAGRPVPASVDDDGAAARRLEAESTSIRADREKNEAMTRDVEESVREFTRSLEDSLKEEGETSTREHERRRWEDALGVEDVIRDFIYDLQRGSRTAHVRKEEESRASEQRLRHEEPSAGVSRLSPAPSAGSAGSLPGSTHEDRVAAARERAQRRIAERMAAAGLKPHTDTSETLLQRQEREKREREERLRQAEEEDAKREQERQRRLAEEQRSTSNAPAKPVGKKPPPAPPSRRGRTDSAGQAEVKKAAEETVTAEQAAREQAIREEQQAQEEETNRLEMEAQQREEELLKEKEAQEARLRALEEQVRQGKIRKQEEKRRKEEAERLAKEKEAALAAQRAEIERAKERERQLQLELEGLDEESSSDDEGPANITPEDSTPTQSQLLPTVTPAAPVSAPESEQAGSPEDTSSQAPPVGFSSETESKNPYFKITHQAADTQVVSPPPAPQPNVTSPRADVHSTNPFHRLAQQESSKPVFTGSAPLERKSRARPEADDDWSAAGSEFDSSDDDDDERPGGGSAKQLASILFGTMAPPRPLSAMDDKSPSKSSTPVQDSPVTSLPVPEPNGSLSAPAAPPPPPPPPPPAAVPSYDSSVAPPPPPAPPMAPPMAPPAPPPGPPPPPGPPPPPAPPAAGGPPTPAGAPDRSALLASIQMGKGLRKVQTNDRSTSSSAGRVLD.

A disordered region spans residues Met1–Ile157. A compositionally biased stretch (low complexity) spans Gln25–Pro48. Residues Gln54 to Phe75 show a composition bias toward polar residues. Residues Gly77 to Gln101 are compositionally biased toward low complexity. Residues Arg129–Ser139 show a composition bias toward polar residues. Residues Asp169–Met257 form the EH 1 domain. The EF-hand 1 domain occupies Leu201–Arg236. Disordered stretches follow at residues Asp282 to Asn305 and Gln343 to Pro377. The segment covering Pro292–Gln301 has biased composition (pro residues). Low complexity predominate over residues Pro348–Pro360. The EH 2 domain occupies Glu458–Asn547. The EF-hand 2 domain maps to Leu491–Lys526. Disordered regions lie at residues Gly614–Glu641, Glu794–Arg864, Gly886–Lys1087, and Glu1099–Asp1470. Residues Ala627–Ala637 show a composition bias toward low complexity. Residues Ala633–His758 are a coiled coil. 2 stretches are compositionally biased toward basic and acidic residues: residues Ala809–Arg864 and Val892–Pro910. The span at Leu917 to Ser932 shows a compositional bias: low complexity. Basic and acidic residues-rich tracts occupy residues Thr933–Glu951, Arg971–Arg1006, Ala1052–Lys1087, Glu1099–Ala1127, and Ala1134–Leu1146. The stretch at Asp963–Ser1159 forms a coiled coil. The span at Glu1151 to Gly1163 shows a compositional bias: acidic residues. Residues Pro1169 to Leu1180 show a composition bias toward polar residues. Residues Pro1181–Glu1195 are compositionally biased toward low complexity. Over residues Pro1243–Pro1269 the composition is skewed to polar residues. Basic and acidic residues predominate over residues Leu1277 to Glu1286. The span at Ser1340 to Thr1352 shows a compositional bias: polar residues. 2 stretches are compositionally biased toward pro residues: residues Ala1367–Ala1380 and Ala1389–Ala1433. In terms of domain architecture, WH2 spans Asp1437–Val1454. Residues Asn1457–Asp1470 are compositionally biased toward polar residues.

It belongs to the PAN1 family. In terms of assembly, component of the PAN1 actin cytoskeleton-regulatory complex.

The protein localises to the cell membrane. Its subcellular location is the endosome membrane. It is found in the cytoplasm. The protein resides in the cytoskeleton. It localises to the actin patch. Component of the PAN1 actin cytoskeleton-regulatory complex required for the internalization of endosomes during actin-coupled endocytosis. The complex links the site of endocytosis to the cell membrane-associated actin cytoskeleton. Mediates uptake of external molecules and vacuolar degradation of plasma membrane proteins. Plays a role in the proper organization of the cell membrane-associated actin cytoskeleton and promotes its destabilization. The polypeptide is Actin cytoskeleton-regulatory complex protein pan1 (pan1) (Neosartorya fischeri (strain ATCC 1020 / DSM 3700 / CBS 544.65 / FGSC A1164 / JCM 1740 / NRRL 181 / WB 181) (Aspergillus fischerianus)).